A 72-amino-acid chain; its full sequence is Translation initiation factor IF-1 (72 aa).

The S1-like domain maps to 1–72; that stretch reads MSKDDCIEFE…TKGRIIYRMK (72 aa).

This sequence belongs to the IF-1 family. In terms of assembly, component of the 30S ribosomal translation pre-initiation complex which assembles on the 30S ribosome in the order IF-2 and IF-3, IF-1 and N-formylmethionyl-tRNA(fMet); mRNA recruitment can occur at any time during PIC assembly.

The protein localises to the cytoplasm. Functionally, one of the essential components for the initiation of protein synthesis. Stabilizes the binding of IF-2 and IF-3 on the 30S subunit to which N-formylmethionyl-tRNA(fMet) subsequently binds. Helps modulate mRNA selection, yielding the 30S pre-initiation complex (PIC). Upon addition of the 50S ribosomal subunit IF-1, IF-2 and IF-3 are released leaving the mature 70S translation initiation complex. The sequence is that of Translation initiation factor IF-1 from Xylella fastidiosa (strain 9a5c).